Reading from the N-terminus, the 609-residue chain is Proteasome-associated ATPase (609 aa).

Residues 1–25 form a disordered region; it reads MADSERSEAFGTPDDTPLSSNDAAE. Residues 19 to 96 are a coiled coil; the sequence is SSNDAAELEQ…LREEVDRLGQ (78 aa). Position 296-301 (296-301) interacts with ATP; that stretch reads GCGKTL. Residues 608 to 609 are docks into pockets in the proteasome alpha-ring; the sequence is YL.

Belongs to the AAA ATPase family. Homohexamer. Assembles into a hexameric ring structure that caps the 20S proteasome core. Strongly interacts with the prokaryotic ubiquitin-like protein Pup through a hydrophobic interface; the interacting region of ARC lies in its N-terminal coiled-coil domain. There is one Pup binding site per ARC hexamer ring. Upon ATP-binding, the C-terminus of ARC interacts with the alpha-rings of the proteasome core, possibly by binding to the intersubunit pockets.

It participates in protein degradation; proteasomal Pup-dependent pathway. In terms of biological role, ATPase which is responsible for recognizing, binding, unfolding and translocation of pupylated proteins into the bacterial 20S proteasome core particle. May be essential for opening the gate of the 20S proteasome via an interaction with its C-terminus, thereby allowing substrate entry and access to the site of proteolysis. Thus, the C-termini of the proteasomal ATPase may function like a 'key in a lock' to induce gate opening and therefore regulate proteolysis. The chain is Proteasome-associated ATPase from Mycobacterium marinum (strain ATCC BAA-535 / M).